The primary structure comprises 511 residues: Cytochrome P450 4A7 (511 aa).

Residues 1-4 constitute a propeptide that is removed on maturation; that stretch reads MSVS. Heme contacts are provided by Glu-322 and Cys-458.

It belongs to the cytochrome P450 family. Requires heme as cofactor. Liver, kidney, small intestine.

The protein resides in the endoplasmic reticulum membrane. The protein localises to the microsome membrane. The enzyme catalyses an omega-methyl-long-chain fatty acid + reduced [NADPH--hemoprotein reductase] + O2 = an omega-hydroxy-long-chain fatty acid + oxidized [NADPH--hemoprotein reductase] + H2O + H(+). Its function is as follows. Cytochromes P450 are a group of heme-thiolate monooxygenases. In liver microsomes, this enzyme is involved in an NADPH-dependent electron transport pathway. It oxidizes a variety of structurally unrelated compounds, including steroids, fatty acids, and xenobiotics. The kidney P-450 system is rather specialized for the omega-hydroxylation of fatty acids. Both P450-KA1 and P450-KA2 catalyze the omega- and (omega-1)-hydroxylation of various fatty acids with no drug-metabolizing activity, and hydroxylate prostaglandin A1 and A2 solely at the omega-position. In Oryctolagus cuniculus (Rabbit), this protein is Cytochrome P450 4A7 (CYP4A7).